A 907-amino-acid chain; its full sequence is Translation initiation factor IF-2 (907 aa).

Basic and acidic residues-rich tracts occupy residues 223-235 (LAQRRQEEAKRAA), 251-263 (VAKEAPKPEEKNA), and 270-281 (GGKDWNDSDGKK). The disordered stretch occupies residues 223–320 (LAQRRQEEAK…ENQQHAFTAP (98 aa)). A tr-type G domain is found at 407-576 (PRPPVVTVMG…LLQAEVLELK (170 aa)). The tract at residues 416 to 423 (GHVDHGKT) is G1. 416–423 (GHVDHGKT) lines the GTP pocket. The segment at 441–445 (GITQH) is G2. The G3 stretch occupies residues 462 to 465 (DTPG). GTP is bound by residues 462–466 (DTPGH) and 516–519 (NKID). Residues 516–519 (NKID) are G4. The tract at residues 552-554 (SAK) is G5.

The protein belongs to the TRAFAC class translation factor GTPase superfamily. Classic translation factor GTPase family. IF-2 subfamily.

It localises to the cytoplasm. One of the essential components for the initiation of protein synthesis. Protects formylmethionyl-tRNA from spontaneous hydrolysis and promotes its binding to the 30S ribosomal subunits. Also involved in the hydrolysis of GTP during the formation of the 70S ribosomal complex. The protein is Translation initiation factor IF-2 of Methylobacillus flagellatus (strain ATCC 51484 / DSM 6875 / VKM B-1610 / KT).